A 466-amino-acid chain; its full sequence is RUS family member 1 (466 aa).

Ala2 carries the N-acetylalanine modification. The chain crosses the membrane as a helical span at residues 245–265 (LLMLPLVSDCLSLSLGCFILL).

Belongs to the RUS1 family.

The protein localises to the membrane. The sequence is that of RUS family member 1 (Rusf1) from Rattus norvegicus (Rat).